The sequence spans 286 residues: Pantothenate synthetase (286 aa).

31–38 is an ATP binding site; the sequence is MGALHEGH. His38 functions as the Proton donor in the catalytic mechanism. Gln65 serves as a coordination point for (R)-pantoate. Gln65 lines the beta-alanine pocket. ATP is bound at residue 153–156; that stretch reads GEKD. Gln159 lines the (R)-pantoate pocket. An ATP-binding site is contributed by 190 to 193; it reads LSSR.

This sequence belongs to the pantothenate synthetase family. Homodimer.

The protein localises to the cytoplasm. The enzyme catalyses (R)-pantoate + beta-alanine + ATP = (R)-pantothenate + AMP + diphosphate + H(+). It functions in the pathway cofactor biosynthesis; (R)-pantothenate biosynthesis; (R)-pantothenate from (R)-pantoate and beta-alanine: step 1/1. Functionally, catalyzes the condensation of pantoate with beta-alanine in an ATP-dependent reaction via a pantoyl-adenylate intermediate. This chain is Pantothenate synthetase, found in Corynebacterium diphtheriae (strain ATCC 700971 / NCTC 13129 / Biotype gravis).